Reading from the N-terminus, the 541-residue chain is Tegument protein UL21 homolog (541 aa).

The protein belongs to the alphaherpesvirinae UL21 protein family. In terms of assembly, interacts (via C-terminus) with UL16.

It localises to the virion tegument. It is found in the host cytoplasm. The protein localises to the host nucleus. In terms of biological role, may participate in DNA packaging/capsid maturation events. Promotes efficient incorporation of tegument proteins UL46, UL49, and US3 homologs into virions. May also play a role in capsid transport to the trans-Golgi network (TGN). This chain is Tegument protein UL21 homolog, found in Homo sapiens (Human).